Reading from the N-terminus, the 240-residue chain is Large ribosomal subunit protein uL1c (240 aa).

Belongs to the universal ribosomal protein uL1 family. Part of the 50S ribosomal subunit.

The protein localises to the plastid. It is found in the chloroplast. Binds directly to 23S rRNA. Might be involved in E site tRNA release (Potential). The sequence is that of Large ribosomal subunit protein uL1c (rpl1) from Cyanidium caldarium (Red alga).